A 555-amino-acid chain; its full sequence is MIGTDPRTILKDLLPETIPPPELDDMTLWQIVINILSEPPKRKKRKDINTIEDAVKLLQECKKIIVLTGAGVSVSCGIPDFRSRDGIYARLAVDFPDLPDPQAMFDIEYFRKDPRPFFKFAKEIYPGQFQPSLCHKFIALSDKEGKLLRNYTQNIDTLEQVAGIQRIIQCHGSFATASCLICKYKVDCEAVRGDIFNQVVPRCPRCPADEPLAIMKPEIVFFGENLPEQFHRAMKYDKDEVDLLIVIGSSLKVRPVALIPSSIPHEVPQILINREPLPHLHFDVELLGDCDVIINELCHRLGGEYAKLCCNPVKLSEITEKPPRTQKELVHLSELPPTPLHISEDSSSPERTVPQDSSVIATLVDQTIKNKVDDLEVSEPKSCVEEKSQEVQTYRNVESINVENPDFKAVGSSTGDKNERTSVAETVRKCWPNRLAKEQISKRLDGNQYLFVPPNRYIFHGAEVYSDSEDDALSSSSCGSNSDSGTCQSPSLEEPLEDESEIEEFYNGLEDDADRPECAGGSGADGGDQEAVNEAIAMKQELTDVNCTPDKSEHY.

The Nuclear localization signal signature appears at 39-46; sequence PPKRKKRK. The Deacetylase sirtuin-type domain maps to 44–304; that stretch reads KRKDINTIED…NELCHRLGGE (261 aa). K46 bears the N6-acetyllysine mark. The interval 64–67 is required for interaction with the sumoylated form of CCAR2; sequence IIVL. NAD(+) contacts are provided by residues 69 to 88 and 153 to 156; these read GAGVSVSCGIPDFRSRDGIY and QNID. H171 serves as the catalytic Proton acceptor. Zn(2+) contacts are provided by C179 and C182. K185 bears the N6-acetyllysine mark. The Zn(2+) site is built by C203 and C206. S-nitrosocysteine occurs at positions 203 and 206. K238 is modified (N6-acetyllysine). The Nuclear export signal signature appears at 241–247; the sequence is VDLLIVI. NAD(+) is bound by residues 248 to 250, 273 to 275, and C290; these read GSS and NRE. K321 is subject to N6-acetyllysine. The segment at 335 to 354 is disordered; the sequence is LPPTPLHISEDSSSPERTVP. T338 carries the post-translational modification Phosphothreonine. S343 is modified (phosphoserine). Over residues 345-354 the composition is skewed to polar residues; that stretch reads DSSSPERTVP. Residue T352 is modified to Phosphothreonine. K417 carries the N6-acetyllysine modification. Phosphoserine is present on residues S466 and S468. The interval 469–529 is disordered; that stretch reads EDDALSSSSC…GGSGADGGDQ (61 aa). Residues 473 to 493 show a composition bias toward low complexity; the sequence is LSSSSCGSNSDSGTCQSPSLE. Residues 494-514 are compositionally biased toward acidic residues; that stretch reads EPLEDESEIEEFYNGLEDDAD. Position 552 is a phosphoserine (S552).

The protein belongs to the sirtuin family. Class I subfamily. As to quaternary structure, interacts with XBP1 isoform 2. Found in a complex with PCAF and MYOD1. Interacts with FOXO1; the interaction deacetylates FOXO1, resulting in its nuclear retention and promotion of its transcriptional activity Component of the eNoSC complex, composed of SIRT1, SUV39H1 and RRP8. Interacts with HES1, HEY2 and PML. Interacts with RPS19BP1/AROS. Interacts with CCAR2 (via N-terminus); the interaction disrupts the interaction between SIRT1 and p53/TP53. Interacts with SETD7; the interaction induces the dissociation of SIRT1 from p53/TP53 and increases p53/TP53 activity. Interacts with MYCN, NR1I2, CREBZF, TSC2, TLE1, FOS, JUN, NR0B2, PPARG, NCOR, IRS1, IRS2 and NMNAT1. Interacts with HNF1A; the interaction occurs under nutrient restriction. Interacts with SUZ12; the interaction mediates the association with the PRC4 histone methylation complex which is specific as an association with PCR2 and PCR3 complex variants is not found. Interacts with HIV-1 tat. Interacts with BCL6; leads to a epigenetic repression of specific target genes. Interacts with CLOCK, BMAL1 and PER2. Interacts with PPARA; the interaction seems to be modulated by NAD(+) levels. Interacts with NR1H3 and this interaction is inhibited in the presence of CCAR2. Interacts with CHEK2. Interacts with p53/TP53. Exhibits a preferential interaction with sumoylated CCAR2 over its unmodified form. Interacts with PACS2. Interacts with SIRT7. Interacts with PUS7. Interacts with TULP3. Interacts with MORN3; the interaction enhances the ubiquitination of p53/TP53. Requires Zn(2+) as cofactor. Post-translationally, methylated on multiple lysine residues; methylation is enhanced after DNA damage and is dispensable for deacetylase activity toward p53/TP53. Phosphorylated. Phosphorylated by STK4/MST1, resulting in inhibition of SIRT1-mediated p53/TP53 deacetylation. Phosphorylation by MAPK8/JNK1 at Thr-338 leads to increased nuclear localization and enzymatic activity. Phosphorylation at Thr-338 by DYRK1A and DYRK3 activates deacetylase activity and promotes cell survival. Phosphorylated by CaMK2, leading to increased p53/TP53 and NF-kappa-B p65/RELA deacetylation activity. In terms of processing, S-nitrosylated by GAPDH, leading to inhibit the NAD-dependent protein deacetylase activity. Post-translationally, acetylated at various Lys residues. Deacetylated via an autocatalytic mechanism. Autodeacetylation at Lys-46 promotes its protein deacetylase activity. Ubiquitinated; leading to degradation. Deubiquitinated by USP22; leading to stabilization.

The protein localises to the nucleus. The protein resides in the PML body. It is found in the cytoplasm. It carries out the reaction N(6)-acetyl-L-lysyl-[protein] + NAD(+) + H2O = 2''-O-acetyl-ADP-D-ribose + nicotinamide + L-lysyl-[protein]. It catalyses the reaction N(6)-propanoyl-L-lysyl-[protein] + NAD(+) + H2O = 3''-O-propanoyl-ADP-D-ribose + nicotinamide + L-lysyl-[protein]. The catalysed reaction is N(6)-(2E)-butenoyl-L-lysyl-[protein] + NAD(+) + H2O = 2''-O-(2E)-but-2-enoyl-ADP-D-ribose + nicotinamide + L-lysyl-[protein]. Inhibited by nicotinamide. Activated by resveratrol (3,5,4'-trihydroxy-trans-stilbene), butein (3,4,2',4'-tetrahydroxychalcone), piceatannol (3,5,3',4'-tetrahydroxy-trans-stilbene), Isoliquiritigenin (4,2',4'-trihydroxychalcone), fisetin (3,7,3',4'-tetrahydroxyflavone) and quercetin (3,5,7,3',4'-pentahydroxyflavone). MAPK8/JNK1 and RPS19BP1/AROS act as positive regulators of deacetylation activity. Negatively regulated by CCAR2. Its function is as follows. NAD-dependent protein deacetylase that links transcriptional regulation directly to intracellular energetics and participates in the coordination of several separated cellular functions such as cell cycle, response to DNA damage, metabolism, apoptosis and autophagy. Can modulate chromatin function through deacetylation of histones and can promote alterations in the methylation of histones and DNA, leading to transcriptional repression. Deacetylates a broad range of transcription factors and coregulators, thereby regulating target gene expression positively and negatively. Serves as a sensor of the cytosolic ratio of NAD(+)/NADH which is altered by glucose deprivation and metabolic changes associated with caloric restriction. Is essential in skeletal muscle cell differentiation and in response to low nutrients mediates the inhibitory effect on skeletal myoblast differentiation which also involves 5'-AMP-activated protein kinase (AMPK) and nicotinamide phosphoribosyltransferase (NAMPT). Component of the eNoSC (energy-dependent nucleolar silencing) complex, a complex that mediates silencing of rDNA in response to intracellular energy status and acts by recruiting histone-modifying enzymes. The eNoSC complex is able to sense the energy status of cell: upon glucose starvation, elevation of NAD(+)/NADP(+) ratio activates SIRT1, leading to histone H3 deacetylation followed by dimethylation of H3 at 'Lys-9' (H3K9me2) by SUV39H1 and the formation of silent chromatin in the rDNA locus. Deacetylates 'Lys-266' of SUV39H1, leading to its activation. Inhibits skeletal muscle differentiation by deacetylating PCAF and MYOD1. Deacetylates H2A and 'Lys-26' of H1-4. Deacetylates 'Lys-16' of histone H4 (in vitro). Involved in NR0B2/SHP corepression function through chromatin remodeling: Recruited to LRH1 target gene promoters by NR0B2/SHP thereby stimulating histone H3 and H4 deacetylation leading to transcriptional repression. Proposed to contribute to genomic integrity via positive regulation of telomere length; however, reports on localization to pericentromeric heterochromatin are conflicting. Proposed to play a role in constitutive heterochromatin (CH) formation and/or maintenance through regulation of the available pool of nuclear SUV39H1. Upon oxidative/metabolic stress decreases SUV39H1 degradation by inhibiting SUV39H1 polyubiquitination by MDM2. This increase in SUV39H1 levels enhances SUV39H1 turnover in CH, which in turn seems to accelerate renewal of the heterochromatin which correlates with greater genomic integrity during stress response. Deacetylates 'Lys-382' of p53/TP53 and impairs its ability to induce transcription-dependent proapoptotic program and modulate cell senescence. Deacetylates TAF1B and thereby represses rDNA transcription by the RNA polymerase I. Deacetylates MYC, promotes the association of MYC with MAX and decreases MYC stability leading to compromised transformational capability. Deacetylates FOXO3 in response to oxidative stress thereby increasing its ability to induce cell cycle arrest and resistance to oxidative stress but inhibiting FOXO3-mediated induction of apoptosis transcriptional activity; also leading to FOXO3 ubiquitination and protesomal degradation. Appears to have a similar effect on MLLT7/FOXO4 in regulation of transcriptional activity and apoptosis. Deacetylates DNMT1; thereby impairs DNMT1 methyltransferase-independent transcription repressor activity, modulates DNMT1 cell cycle regulatory function and DNMT1-mediated gene silencing. Deacetylates RELA/NF-kappa-B p65 thereby inhibiting its transactivating potential and augments apoptosis in response to TNF-alpha. Deacetylates HIF1A, KAT5/TIP60, RB1 and HIC1. Deacetylates FOXO1 resulting in its nuclear retention and enhancement of its transcriptional activity leading to increased gluconeogenesis in liver. Inhibits E2F1 transcriptional activity and apoptotic function, possibly by deacetylation. Involved in HES1- and HEY2-mediated transcriptional repression. In cooperation with MYCN seems to be involved in transcriptional repression of DUSP6/MAPK3 leading to MYCN stabilization by phosphorylation at 'Ser-62'. Deacetylates MEF2D. Required for antagonist-mediated transcription suppression of AR-dependent genes which may be linked to local deacetylation of histone H3. Represses HNF1A-mediated transcription. Required for the repression of ESRRG by CREBZF. Deacetylates NR1H3 AND NR1H2 and deacetylation of NR1H3 at 'Lys-434' positively regulates transcription of NR1H3:RXR target genes, promotes NR1H3 proteasomal degradation and results in cholesterol efflux; a promoter clearing mechanism after reach round of transcription is proposed. Involved in lipid metabolism: deacetylates LPIN1, thereby inhibiting diacylglycerol synthesis. Implicated in regulation of adipogenesis and fat mobilization in white adipocytes by repression of PPARG which probably involves association with NCOR1 and SMRT/NCOR2. Deacetylates p300/EP300 and PRMT1. Deacetylates ACSS2 leading to its activation, and HMGCS1 deacetylation. Involved in liver and muscle metabolism. Through deacetylation and activation of PPARGC1A is required to activate fatty acid oxidation in skeletal muscle under low-glucose conditions and is involved in glucose homeostasis. Involved in regulation of PPARA and fatty acid beta-oxidation in liver. Involved in positive regulation of insulin secretion in pancreatic beta cells in response to glucose; the function seems to imply transcriptional repression of UCP2. Proposed to deacetylate IRS2 thereby facilitating its insulin-induced tyrosine phosphorylation. Deacetylates SREBF1 isoform SREBP-1C thereby decreasing its stability and transactivation in lipogenic gene expression. Involved in DNA damage response by repressing genes which are involved in DNA repair, such as XPC and TP73, deacetylating XRCC6/Ku70, and facilitating recruitment of additional factors to sites of damaged DNA, such as SIRT1-deacetylated NBN can recruit ATM to initiate DNA repair and SIRT1-deacetylated XPA interacts with RPA2. Also involved in DNA repair of DNA double-strand breaks by homologous recombination and specifically single-strand annealing independently of XRCC6/Ku70 and NBN. Promotes DNA double-strand breaks by mediating deacetylation of SIRT6. Transcriptional suppression of XPC probably involves an E2F4:RBL2 suppressor complex and protein kinase B (AKT) signaling. Transcriptional suppression of TP73 probably involves E2F4 and PCAF. Deacetylates WRN thereby regulating its helicase and exonuclease activities and regulates WRN nuclear translocation in response to DNA damage. Deacetylates APEX1 at 'Lys-6' and 'Lys-7' and stimulates cellular AP endonuclease activity by promoting the association of APEX1 to XRCC1. Catalyzes deacetylation of ERCC4/XPF, thereby impairing interaction with ERCC1 and nucleotide excision repair (NER). Increases p53/TP53-mediated transcription-independent apoptosis by blocking nuclear translocation of cytoplasmic p53/TP53 and probably redirecting it to mitochondria. Deacetylates XRCC6/Ku70 at 'Lys-539' and 'Lys-542' causing it to sequester BAX away from mitochondria thereby inhibiting stress-induced apoptosis. Is involved in autophagy, presumably by deacetylating ATG5, ATG7 and MAP1LC3B/ATG8. Deacetylates AKT1 which leads to enhanced binding of AKT1 and PDK1 to PIP3 and promotes their activation. Proposed to play role in regulation of STK11/LBK1-dependent AMPK signaling pathways implicated in cellular senescence which seems to involve the regulation of the acetylation status of STK11/LBK1. Can deacetylate STK11/LBK1 and thereby increase its activity, cytoplasmic localization and association with STRAD; however, the relevance of such activity in normal cells is unclear. In endothelial cells is shown to inhibit STK11/LBK1 activity and to promote its degradation. Deacetylates SMAD7 at 'Lys-64' and 'Lys-70' thereby promoting its degradation. Deacetylates CIITA and augments its MHC class II transactivation and contributes to its stability. Deacetylates MECOM/EVI1. Deacetylates PML at 'Lys-487' and this deacetylation promotes PML control of PER2 nuclear localization. During the neurogenic transition, represses selective NOTCH1-target genes through histone deacetylation in a BCL6-dependent manner and leading to neuronal differentiation. Regulates the circadian expression of several core clock genes, including BMAL1, RORC, PER2 and CRY1 and plays a critical role in maintaining a controlled rhythmicity in histone acetylation, thereby contributing to circadian chromatin remodeling. Deacetylates BMAL1 and histones at the circadian gene promoters in order to facilitate repression by inhibitory components of the circadian oscillator. Deacetylates PER2, facilitating its ubiquitination and degradation by the proteasome. Protects cardiomyocytes against palmitate-induced apoptosis. Deacetylates XBP1 isoform 2; deacetylation decreases protein stability of XBP1 isoform 2 and inhibits its transcriptional activity. Deacetylates PCK1 and directs its activity toward phosphoenolpyruvate production promoting gluconeogenesis. Involved in the CCAR2-mediated regulation of PCK1 and NR1D1. Deacetylates CTNB1 at 'Lys-49'. In POMC (pro-opiomelanocortin) neurons, required for leptin-induced activation of PI3K signaling. In addition to protein deacetylase activity, also acts as a protein-lysine deacylase by mediating protein depropionylation and decrotonylation. Mediates depropionylation of Osterix (SP7). Catalyzes decrotonylation of histones; it however does not represent a major histone decrotonylase. Deacetylates SOX9; promoting SOX9 nuclear localization and transactivation activity. Involved in the regulation of centrosome duplication. Deacetylates CENATAC in G1 phase, allowing for SASS6 accumulation on the centrosome and subsequent procentriole assembly. Deacetylates NDC80/HEC1. The protein is NAD-dependent protein deacetylase sirtuin-1 of Rattus norvegicus (Rat).